The primary structure comprises 408 residues: MKQEIIDRFTRYAKVDTQSTEASNTVPTTEGQLELGRILVEELKALGLTEVTMDDNGYVMATLESNTNKEVPTIGFLAHLDTATEFTGKNVNPQVHEYNGGDIELGHGYVLSPKQFPELAGYEGHTLITTDGTTLLGADDKAGIAEIMTAMDYLIKHPEIEHGKIRVAFTPDEEIGRGPAHFDVDAFGAAFAYTLDGGPLGQFQYESFNAAAAKVSFYGVSTHPGTAKNKMVNAIKRAIEFHSQLPANEAPEFTEGYEGFYHLLSMEGNADFAELHYIIRDFDRQQFANRKAKMEAIAWEMQEKHGKGKVSIELRDQYYNMREKIEPQKEIVEVALEAMEKLGIDPKVGPIRGGTDGSQLSYKGLPTPNIFTGGENYHGRYEYVSVDNMEKAVHVIVNIANLVAQRAK.

H79 contacts Zn(2+). Residue D81 is part of the active site. Position 139 (D139) interacts with Zn(2+). Catalysis depends on E173, which acts as the Proton acceptor. E174, D196, and H378 together coordinate Zn(2+).

This sequence belongs to the peptidase M20B family. It depends on Zn(2+) as a cofactor.

Its subcellular location is the cytoplasm. It carries out the reaction Release of the N-terminal residue from a tripeptide.. Functionally, cleaves the N-terminal amino acid of tripeptides. The chain is Peptidase T from Shouchella clausii (strain KSM-K16) (Alkalihalobacillus clausii).